A 213-amino-acid polypeptide reads, in one-letter code: CDP-diacylglycerol--inositol 3-phosphatidyltransferase (213 aa).

Residues methionine 1–asparagine 5 lie on the Cytoplasmic side of the membrane. A helical membrane pass occupies residues isoleucine 6–phenylalanine 26. A topological domain (lumenal) is located at residue tyrosine 27. A helical membrane pass occupies residues phenylalanine 28–alanine 48. Residues aspartate 47 and aspartate 50 each contribute to the Mg(2+) site. Over phenylalanine 49–arginine 73 the chain is Cytoplasmic. The a CDP-1,2-diacyl-sn-glycerol site is built by glycine 51, arginine 55, and threonine 61. Mg(2+)-binding residues include aspartate 68 and aspartate 72. The active-site Proton acceptor is the aspartate 72. A helical membrane pass occupies residues cysteine 74 to phenylalanine 94. Residue glutamine 95 is a topological domain, lumenal. Residues leucine 96–glycine 116 traverse the membrane as a helical segment. The Cytoplasmic portion of the chain corresponds to serine 117–proline 139. A helical transmembrane segment spans residues alanine 140–phenylalanine 160. The Lumenal portion of the chain corresponds to serine 161–methionine 174. A helical membrane pass occupies residues glycine 175–valine 195. Residues threonine 196–lysine 213 are Cytoplasmic-facing.

The protein belongs to the CDP-alcohol phosphatidyltransferase class-I family. It depends on Mn(2+) as a cofactor. Requires Mg(2+) as cofactor. As to expression, detected in liver (at protein level). Widely expressed. Highly expressed in the brain and kidney; lower levels in heart, spleen, lung, liver, skeletal muscle and testis.

It is found in the endoplasmic reticulum membrane. It localises to the cell membrane. It carries out the reaction a CDP-1,2-diacyl-sn-glycerol + myo-inositol = a 1,2-diacyl-sn-glycero-3-phospho-(1D-myo-inositol) + CMP + H(+). Functionally, catalyzes the biosynthesis of phosphatidylinositol (PtdIns) as well as PtdIns:inositol exchange reaction. May thus act to reduce an excessive cellular PtdIns content. The exchange activity is due to the reverse reaction of PtdIns synthase and is dependent on CMP, which is tightly bound to the enzyme. This chain is CDP-diacylglycerol--inositol 3-phosphatidyltransferase, found in Rattus norvegicus (Rat).